Here is a 102-residue protein sequence, read N- to C-terminus: Small ribosomal subunit protein uS10 (102 aa).

It belongs to the universal ribosomal protein uS10 family. As to quaternary structure, part of the 30S ribosomal subunit.

Its function is as follows. Involved in the binding of tRNA to the ribosomes. The protein is Small ribosomal subunit protein uS10 of Lactobacillus gasseri (strain ATCC 33323 / DSM 20243 / BCRC 14619 / CIP 102991 / JCM 1131 / KCTC 3163 / NCIMB 11718 / NCTC 13722 / AM63).